The following is an 87-amino-acid chain: Large ribosomal subunit protein eL31 (87 aa).

The protein belongs to the eukaryotic ribosomal protein eL31 family.

This Methanocorpusculum labreanum (strain ATCC 43576 / DSM 4855 / Z) protein is Large ribosomal subunit protein eL31.